The sequence spans 448 residues: Receptor homology region, transmembrane domain- and RING domain-containing protein 2 (448 aa).

Positions 1–20 are cleaved as a signal peptide; sequence MNRALVLLLYVCTVSCLASS. The Lumenal segment spans residues 21–163; sequence KVILMRNNIT…IPSFENSAWS (143 aa). N28 and N74 each carry an N-linked (GlcNAc...) asparagine glycan. A PA domain is found at 60–144; it reads DACQNLMNKP…ETGEVLKEYA (85 aa). A disulfide bridge connects residues C62 and C87. The helical transmembrane segment at 164 to 184 threads the bilayer; sequence IMAVSFISLLAMSAVLATCFF. The Cytoplasmic segment spans residues 185 to 448; sequence VRRHRIRRRT…YASANSLPDC (264 aa). The RING-type; atypical zinc finger occupies 232 to 274; the sequence is CAICLEDYTVGDKLRLLPCCHKFHAACVDSWLTSWRTFCPVCK. Positions 344–378 are enriched in low complexity; the sequence is QSSSNRRSPPISVSRSSVDLRQQAASPSPSPSQRS. Disordered stretches follow at residues 344 to 380 and 402 to 424; these read QSSS…RSYI and MSPY…NYPL. Polar residues predominate over residues 408–423; sequence SPSNASPAMAGSSNYP.

The protein localises to the protein storage vacuole membrane. It is found in the golgi apparatus membrane. Functionally, involved in the trafficking of vacuolar proteins. May function as a sorting receptor for protein trafficking to the protein storage vacuole (PSV). The sequence is that of Receptor homology region, transmembrane domain- and RING domain-containing protein 2 (RMR2) from Arabidopsis thaliana (Mouse-ear cress).